Reading from the N-terminus, the 533-residue chain is Peptide chain release factor 3 (533 aa).

One can recognise a tr-type G domain in the interval 9–284 (ARRRTFAIIS…ALCELSPPPL (276 aa)). GTP is bound by residues 18–25 (SHPDAGKT), 95–99 (DTPGH), and 149–152 (NKLD).

Belongs to the TRAFAC class translation factor GTPase superfamily. Classic translation factor GTPase family. PrfC subfamily.

The protein resides in the cytoplasm. In terms of biological role, increases the formation of ribosomal termination complexes and stimulates activities of RF-1 and RF-2. It binds guanine nucleotides and has strong preference for UGA stop codons. It may interact directly with the ribosome. The stimulation of RF-1 and RF-2 is significantly reduced by GTP and GDP, but not by GMP. This is Peptide chain release factor 3 from Cupriavidus taiwanensis (strain DSM 17343 / BCRC 17206 / CCUG 44338 / CIP 107171 / LMG 19424 / R1) (Ralstonia taiwanensis (strain LMG 19424)).